A 442-amino-acid polypeptide reads, in one-letter code: Ribosomal protein uS12 methylthiotransferase RimO (442 aa).

Positions 9-119 constitute an MTTase N-terminal domain; that stretch reads PRIGFVSLGC…VLSHVHQYVP (111 aa). [4Fe-4S] cluster is bound by residues Cys-18, Cys-54, Cys-83, Cys-151, Cys-155, and Cys-158. One can recognise a Radical SAM core domain in the interval 137–375; the sequence is LTPRHYAYLK…QLQQAISTQR (239 aa). One can recognise a TRAM domain in the interval 377–442; sequence QDKIGREVLV…DEYDLWGSRV (66 aa).

Belongs to the methylthiotransferase family. RimO subfamily. [4Fe-4S] cluster is required as a cofactor.

It is found in the cytoplasm. It catalyses the reaction L-aspartate(89)-[ribosomal protein uS12]-hydrogen + (sulfur carrier)-SH + AH2 + 2 S-adenosyl-L-methionine = 3-methylsulfanyl-L-aspartate(89)-[ribosomal protein uS12]-hydrogen + (sulfur carrier)-H + 5'-deoxyadenosine + L-methionine + A + S-adenosyl-L-homocysteine + 2 H(+). Functionally, catalyzes the methylthiolation of an aspartic acid residue of ribosomal protein uS12. This chain is Ribosomal protein uS12 methylthiotransferase RimO, found in Pectobacterium atrosepticum (strain SCRI 1043 / ATCC BAA-672) (Erwinia carotovora subsp. atroseptica).